The sequence spans 595 residues: Beta-lactamase-like protein ARB_00930 (595 aa).

Residues 1-18 (MVVCFLWLLLPYAATTLS) form the signal peptide. 2 N-linked (GlcNAc...) asparagine glycosylation sites follow: N70 and N102. S117 serves as the catalytic Acyl-ester intermediate. 3 N-linked (GlcNAc...) asparagine glycosylation sites follow: N147, N156, and N195. Catalysis depends on Y235, which acts as the Proton acceptor. N-linked (GlcNAc...) asparagine glycans are attached at residues N249, N461, and N473.

This sequence belongs to the beta-lactamase family.

The protein localises to the secreted. It carries out the reaction a beta-lactam + H2O = a substituted beta-amino acid. This is Beta-lactamase-like protein ARB_00930 from Arthroderma benhamiae (strain ATCC MYA-4681 / CBS 112371) (Trichophyton mentagrophytes).